Here is a 108-residue protein sequence, read N- to C-terminus: UPF0060 membrane protein Msil_1658 (108 aa).

The next 4 helical transmembrane spans lie at 5–25 (LVYV…WAWL), 31–51 (SLWL…LTLI), 62–82 (AYGG…EGVW), and 88–108 (LGGA…PRPA).

This sequence belongs to the UPF0060 family.

The protein resides in the cell inner membrane. This is UPF0060 membrane protein Msil_1658 from Methylocella silvestris (strain DSM 15510 / CIP 108128 / LMG 27833 / NCIMB 13906 / BL2).